Here is a 400-residue protein sequence, read N- to C-terminus: NADH-quinone oxidoreductase subunit D (400 aa).

It belongs to the complex I 49 kDa subunit family. In terms of assembly, NDH-1 is composed of 14 different subunits. Subunits NuoB, C, D, E, F, and G constitute the peripheral sector of the complex.

The protein localises to the cell inner membrane. The catalysed reaction is a quinone + NADH + 5 H(+)(in) = a quinol + NAD(+) + 4 H(+)(out). Its function is as follows. NDH-1 shuttles electrons from NADH, via FMN and iron-sulfur (Fe-S) centers, to quinones in the respiratory chain. The immediate electron acceptor for the enzyme in this species is believed to be a menaquinone. Couples the redox reaction to proton translocation (for every two electrons transferred, four hydrogen ions are translocated across the cytoplasmic membrane), and thus conserves the redox energy in a proton gradient. The sequence is that of NADH-quinone oxidoreductase subunit D from Chlorobaculum tepidum (strain ATCC 49652 / DSM 12025 / NBRC 103806 / TLS) (Chlorobium tepidum).